The sequence spans 426 residues: Gamma-glutamyl phosphate reductase (426 aa).

This sequence belongs to the gamma-glutamyl phosphate reductase family.

It localises to the cytoplasm. The catalysed reaction is L-glutamate 5-semialdehyde + phosphate + NADP(+) = L-glutamyl 5-phosphate + NADPH + H(+). It functions in the pathway amino-acid biosynthesis; L-proline biosynthesis; L-glutamate 5-semialdehyde from L-glutamate: step 2/2. Its function is as follows. Catalyzes the NADPH-dependent reduction of L-glutamate 5-phosphate into L-glutamate 5-semialdehyde and phosphate. The product spontaneously undergoes cyclization to form 1-pyrroline-5-carboxylate. The polypeptide is Gamma-glutamyl phosphate reductase (Delftia acidovorans (strain DSM 14801 / SPH-1)).